A 564-amino-acid chain; its full sequence is Bicarbonate transporter BicA (564 aa).

The Cytoplasmic portion of the chain corresponds to 1–11 (MQITNKIHFRN). Residues 12-37 (LQGDLFGGVTAAVIALPMALAFGIAS) traverse the membrane as a helical segment. Over 38-40 (GAG) the chain is Periplasmic. The chain crosses the membrane as a helical span at residues 41–58 (ATAGLWGAVIVGFFAALF). At 59 to 70 (GGTPTLISEPTG) the chain is on the cytoplasmic side. Thr69 is a hydrogencarbonate binding site. The helical transmembrane segment at 71-86 (PMTVVQTAVIASLVAA) threads the bilayer. Residues 87 to 90 (DPDN) lie on the Periplasmic side of the membrane. A helical membrane pass occupies residues 91 to 112 (GLAMAFTVVMMAGLFQIAFGLL). At 113-122 (KLGKYVTMMP) the chain is on the cytoplasmic side. Residues 123–145 (YTVISGFMSGIGIILVILQLAPF) traverse the membrane as a helical segment. The Periplasmic segment spans residues 146–170 (LGQASPKGGVIGTLQALPNLVSNVR). The helical transmembrane segment at 171 to 185 (PVETLLALMTVGIIW) threads the bilayer. The Cytoplasmic segment spans residues 186–196 (FMPSRWKKFAP). Residues 197 to 211 (PQLVALVLGTIISIT) form a helical membrane-spanning segment. At 212–240 (LFGDLDIRRIGEIQAGLPALQLPVFQADQ) the chain is on the periplasmic side. A helical membrane pass occupies residues 241–269 (LQRMLIDAAVLGMLGCIDALLTSVVADSL). Na(+) contacts are provided by Asp258 and Thr262. The Cytoplasmic segment spans residues 270 to 275 (TRTEHN). A helical transmembrane segment spans residues 276-292 (SNKELVGQGIGNVMSGL). Topologically, residues 293-302 (FGGLGGAGAT) are periplasmic. Gly300 lines the Na(+) pocket. Ala301 is a hydrogencarbonate binding site. Na(+) is bound at residue Thr302. The chain crosses the membrane as a helical span at residues 303-312 (MGTVVNIQSG). Over 313 to 315 (GRT) the chain is Cytoplasmic. A helical membrane pass occupies residues 316 to 338 (ALSGLIRAMVLLVVILGAAKLAA). At 339-341 (TIP) the chain is on the periplasmic side. A helical transmembrane segment spans residues 342-357 (LAVLAGIAFKVGVDII). The Cytoplasmic segment spans residues 358–369 (DWGFLKRAHHVS). The chain crosses the membrane as a helical span at residues 370 to 390 (IKGALIMYAVIVLTVLVDLIA). The Periplasmic segment spans residues 391–392 (AV). The helical transmembrane segment at 393–405 (GIGVFIANILTID) threads the bilayer. The Cytoplasmic segment spans residues 406 to 564 (RMSALQSKAV…PSSSSVQTTY (159 aa)). The 111-residue stretch at 432 to 542 (KRWLDEGNGR…DDRSEALKDA (111 aa)) folds into the STAS domain.

Belongs to the SLC26A/SulP transporter (TC 2.A.53) family. In terms of assembly, forms homodimers through the STAS cytoplasmic domain.

Its subcellular location is the cell inner membrane. Low affinity, high-flux Na(+)-dependent bicarbonate transporter. Involved in carbone dioxide-concentrating mechanisms (CCMs) that accumulate CO(2) and improve photosynthetic carbon fixation. The protein is Bicarbonate transporter BicA of Synechocystis sp. (strain ATCC 27184 / PCC 6803 / Kazusa).